We begin with the raw amino-acid sequence, 157 residues long: UPF0179 protein Mhun_1135 (157 aa).

This sequence belongs to the UPF0179 family.

The chain is UPF0179 protein Mhun_1135 from Methanospirillum hungatei JF-1 (strain ATCC 27890 / DSM 864 / NBRC 100397 / JF-1).